A 1090-amino-acid polypeptide reads, in one-letter code: UPF0507 protein C1Q_01007 (1090 aa).

One can recognise a VPS9 domain in the interval 289 to 436; it reads FSVNQLLTDF…FEDFNKNTGN (148 aa).

Belongs to the UPF0507 family.

The chain is UPF0507 protein C1Q_01007 from Saccharomyces cerevisiae (strain JAY291) (Baker's yeast).